The following is a 202-amino-acid chain: N-(5'-phosphoribosyl)anthranilate isomerase (202 aa).

Belongs to the TrpF family.

It carries out the reaction N-(5-phospho-beta-D-ribosyl)anthranilate = 1-(2-carboxyphenylamino)-1-deoxy-D-ribulose 5-phosphate. It functions in the pathway amino-acid biosynthesis; L-tryptophan biosynthesis; L-tryptophan from chorismate: step 3/5. In Listeria monocytogenes serotype 4a (strain HCC23), this protein is N-(5'-phosphoribosyl)anthranilate isomerase.